The chain runs to 466 residues: GTPase Der (466 aa).

EngA-type G domains follow at residues 3 to 166 (PVIA…PEIP) and 177 to 350 (IKIA…QSAT). GTP contacts are provided by residues 9–16 (GRPNVGKS), 56–60 (DTGGI), 118–121 (NKID), 183–190 (GRPNVGKS), 230–234 (DTAGV), and 295–298 (NKWD). Residues 351-435 (DRFSTNYLTR…PIRIEFRTTD (85 aa)) enclose the KH-like domain. The segment at 442 to 466 (KKSMTRQQFIQKRRKEERDRNNPRR) is disordered. Positions 455–466 (RKEERDRNNPRR) are enriched in basic and acidic residues.

It belongs to the TRAFAC class TrmE-Era-EngA-EngB-Septin-like GTPase superfamily. EngA (Der) GTPase family. Associates with the 50S ribosomal subunit.

Functionally, GTPase that plays an essential role in the late steps of ribosome biogenesis. The protein is GTPase Der of Cellvibrio japonicus (strain Ueda107) (Pseudomonas fluorescens subsp. cellulosa).